A 91-amino-acid chain; its full sequence is Teretoxin Tan6.2 (91 aa).

The N-terminal stretch at 1–21 (MATSGRLLCVCLVLGLVFGSL) is a signal peptide. The propeptide occupies 22–50 (GYPVMEKKRAGKNFDLGTIANWAWQIGEK).

The protein belongs to the teretoxin M (TM) superfamily. Contains 3 disulfide bonds. As to expression, expressed by the venom duct.

The protein resides in the secreted. The protein is Teretoxin Tan6.2 of Terebra anilis (Auger snail).